Consider the following 286-residue polypeptide: MTALLIDGNALSKTLRAQAAERAAALTARGHQPGLAVILVGANPASEVYVRNKIKACEDNGFFSLKDAYPATLSEADLLARIHELNRDPKIHGILVQLPLPAHIDSHKVIEAIAPEKDVDGFHVANAGALMTGKPLFRPCTPYGVMKMFEAHGIALQGANAVVIGRSNIVGKPMAMMLLDAGATVTICHSKTRDLAAHTREADIVVAAVGKRNILTADMVKPGATVIDVGMNRDDAGKLCGDVDFAGVKEVAGYITPVPGGVGPMTITMLLINTIESAERAAAAAA.

Residues 165–167 (GRS) and serine 190 contribute to the NADP(+) site.

This sequence belongs to the tetrahydrofolate dehydrogenase/cyclohydrolase family. Homodimer.

It carries out the reaction (6R)-5,10-methylene-5,6,7,8-tetrahydrofolate + NADP(+) = (6R)-5,10-methenyltetrahydrofolate + NADPH. It catalyses the reaction (6R)-5,10-methenyltetrahydrofolate + H2O = (6R)-10-formyltetrahydrofolate + H(+). It participates in one-carbon metabolism; tetrahydrofolate interconversion. Catalyzes the oxidation of 5,10-methylenetetrahydrofolate to 5,10-methenyltetrahydrofolate and then the hydrolysis of 5,10-methenyltetrahydrofolate to 10-formyltetrahydrofolate. The protein is Bifunctional protein FolD of Burkholderia orbicola (strain MC0-3).